We begin with the raw amino-acid sequence, 161 residues long: Peptidyl-prolyl cis-trans isomerase-like 1 (161 aa).

Residues 1–155 form the PPIase cyclophilin-type domain; it reads MATDVAFDTS…DEVKIIRARV (155 aa).

It belongs to the cyclophilin-type PPIase family. PPIL1 subfamily.

The enzyme catalyses [protein]-peptidylproline (omega=180) = [protein]-peptidylproline (omega=0). Functionally, PPIases accelerate the folding of proteins. It catalyzes the cis-trans isomerization of proline imidic peptide bonds in oligopeptides. In Aspergillus oryzae (strain ATCC 42149 / RIB 40) (Yellow koji mold), this protein is Peptidyl-prolyl cis-trans isomerase-like 1 (cyp1).